Consider the following 398-residue polypeptide: uncharacterized protein (398 aa).

The next 2 membrane-spanning stretches (helical) occupy residues 31-51 (VVFSASLSLIIGLITGCCLLF) and 56-76 (AFITSGICLALLVSVISFFGC).

This sequence belongs to the chlamydial CPn_0129/CT_036/TC_0306 family.

The protein resides in the cell membrane. This is an uncharacterized protein from Chlamydia muridarum (strain MoPn / Nigg).